The primary structure comprises 244 residues: Uridylate kinase (244 aa).

19-22 provides a ligand contact to ATP; the sequence is KVSG. Residues 27–32 are involved in allosteric activation by GTP; that stretch reads GERGFG. Glycine 61 is a UMP binding site. Positions 62 and 66 each coordinate ATP. Residues aspartate 80 and 141–148 each bind UMP; that span reads IGSPFFTT. ATP contacts are provided by threonine 168, glutamine 169, tyrosine 174, and aspartate 177.

The protein belongs to the UMP kinase family. As to quaternary structure, homohexamer.

The protein resides in the cytoplasm. The enzyme catalyses UMP + ATP = UDP + ADP. The protein operates within pyrimidine metabolism; CTP biosynthesis via de novo pathway; UDP from UMP (UMPK route): step 1/1. Allosterically activated by GTP. Inhibited by UTP. Its function is as follows. Catalyzes the reversible phosphorylation of UMP to UDP. The sequence is that of Uridylate kinase from Anaplasma phagocytophilum (strain HZ).